A 396-amino-acid polypeptide reads, in one-letter code: MKALVFNPFSGAAGDMILGCTLDLGADRKTVKELIEASVNVSVDIREVVKKGIKALDVRINIPEKEQVRTYPELLDVVKAAKLPSSVEASALGIFSKLAEAEASVHGQPDLEKLHFHEVGQSDALADIIGSSAAIHSLNCDSVYCTPINVGSGTIECAHGVMPVPAPATLELLKKGKFYFRGGTEQKELLTPTGAAILAHFAGPLESFPQGRVISIGYGAGDSELSGPNVLQGTLCELDSCLIPDIIEVLETNADDVSGEVLGNLFEELLAMGARDVAILPATMKKGRPAHVIKVIAKPEDTAKLARKIIVETGSLGVRVIPTRHRLMAARRIESVNFEVEGQIYESAVKIARDSEGILLNMSAEFEDCKKIAKQSGIPVKEVMRKAEEAARKLFS.

The protein belongs to the LarC family.

The protein is Putative nickel insertion protein of Methanosarcina barkeri (strain Fusaro / DSM 804).